We begin with the raw amino-acid sequence, 159 residues long: Ribosomal RNA large subunit methyltransferase H (159 aa).

Residues L76, G108, and 127 to 132 (FGRLTL) each bind S-adenosyl-L-methionine.

The protein belongs to the RNA methyltransferase RlmH family. Homodimer.

The protein resides in the cytoplasm. The catalysed reaction is pseudouridine(1915) in 23S rRNA + S-adenosyl-L-methionine = N(3)-methylpseudouridine(1915) in 23S rRNA + S-adenosyl-L-homocysteine + H(+). In terms of biological role, specifically methylates the pseudouridine at position 1915 (m3Psi1915) in 23S rRNA. In Listeria monocytogenes serotype 4a (strain HCC23), this protein is Ribosomal RNA large subunit methyltransferase H.